Here is a 572-residue protein sequence, read N- to C-terminus: NADP-dependent malic enzyme (572 aa).

Residue Met-1 is modified to N-acetylmethionine. Tyr-102 acts as the Proton donor in catalysis. Residue Arg-155 coordinates NADP(+). The active-site Proton acceptor is Lys-173. Residues Glu-245, Asp-246, and Asp-269 each contribute to the a divalent metal cation site. NADP(+)-binding positions include Asp-269 and 301–318 (GAGE…MAME). Residue Ser-336 is modified to Phosphoserine. Asn-408 is an NADP(+) binding site.

The protein belongs to the malic enzymes family. As to quaternary structure, homotetramer. It depends on Mg(2+) as a cofactor. Mn(2+) serves as cofactor. In terms of tissue distribution, ubiquitous. Up-regulated by 3,5,3'-triiodo-L-thyronine in the liver, kidney and heart.

Its subcellular location is the cytoplasm. It catalyses the reaction (S)-malate + NADP(+) = pyruvate + CO2 + NADPH. It carries out the reaction oxaloacetate + H(+) = pyruvate + CO2. In terms of biological role, catalyzes the oxidative decarboxylation of (S)-malate in the presence of NADP(+) and divalent metal ions, and decarboxylation of oxaloacetate. The polypeptide is NADP-dependent malic enzyme (Me1) (Rattus norvegicus (Rat)).